We begin with the raw amino-acid sequence, 271 residues long: ATP synthase subunit delta (271 aa).

This sequence belongs to the ATPase delta chain family. F-type ATPases have 2 components, F(1) - the catalytic core - and F(0) - the membrane proton channel. F(1) has five subunits: alpha(3), beta(3), gamma(1), delta(1), epsilon(1). F(0) has three main subunits: a(1), b(2) and c(10-14). The alpha and beta chains form an alternating ring which encloses part of the gamma chain. F(1) is attached to F(0) by a central stalk formed by the gamma and epsilon chains, while a peripheral stalk is formed by the delta and b chains.

It localises to the cell membrane. In terms of biological role, f(1)F(0) ATP synthase produces ATP from ADP in the presence of a proton or sodium gradient. F-type ATPases consist of two structural domains, F(1) containing the extramembraneous catalytic core and F(0) containing the membrane proton channel, linked together by a central stalk and a peripheral stalk. During catalysis, ATP synthesis in the catalytic domain of F(1) is coupled via a rotary mechanism of the central stalk subunits to proton translocation. Functionally, this protein is part of the stalk that links CF(0) to CF(1). It either transmits conformational changes from CF(0) to CF(1) or is implicated in proton conduction. The polypeptide is ATP synthase subunit delta (Corynebacterium kroppenstedtii (strain DSM 44385 / JCM 11950 / CIP 105744 / CCUG 35717)).